We begin with the raw amino-acid sequence, 288 residues long: 4-hydroxybenzoate octaprenyltransferase (288 aa).

6 helical membrane-spanning segments follow: residues 20–40, 43–63, 96–116, 210–230, 234–254, and 262–282; these read IGTL…AGGL, LKVF…GCII, LFVV…PLVV, QIIG…GMVA, AIYA…QKLI, and CFTA…ALML.

It belongs to the UbiA prenyltransferase family. The cofactor is Mg(2+).

It is found in the cell inner membrane. It catalyses the reaction all-trans-octaprenyl diphosphate + 4-hydroxybenzoate = 4-hydroxy-3-(all-trans-octaprenyl)benzoate + diphosphate. The protein operates within cofactor biosynthesis; ubiquinone biosynthesis. In terms of biological role, catalyzes the prenylation of para-hydroxybenzoate (PHB) with an all-trans polyprenyl group. Mediates the second step in the final reaction sequence of ubiquinone-8 (UQ-8) biosynthesis, which is the condensation of the polyisoprenoid side chain with PHB, generating the first membrane-bound Q intermediate 3-octaprenyl-4-hydroxybenzoate. The protein is 4-hydroxybenzoate octaprenyltransferase of Shewanella pealeana (strain ATCC 700345 / ANG-SQ1).